The sequence spans 61 residues: Keratin-associated protein 8-1 (61 aa).

Residues 13 to 49 (GCYWGSYGYPLGYSVGCGYGSTYSPVGYGLGYGYNGC) form an 11 X 2 AA repeats of G-[YCGS] region.

This sequence belongs to the KRTAP type 8 family. Interacts with hair keratins. In terms of tissue distribution, expression restricted exclusively to the cortical cells of hair follicles.

Functionally, in the hair cortex, hair keratin intermediate filaments are embedded in an interfilamentous matrix, consisting of hair keratin-associated proteins (KRTAP), which are essential for the formation of a rigid and resistant hair shaft through their extensive disulfide bond cross-linking with abundant cysteine residues of hair keratins. The matrix proteins include the high-sulfur and high-glycine-tyrosine keratins. The chain is Keratin-associated protein 8-1 (Krtap8-1) from Mus musculus (Mouse).